Consider the following 943-residue polypeptide: uncharacterized protein (943 aa).

Position 1 is an N-acetylmethionine (Met1). Disordered regions lie at residues 37-63 (DETP…QQQQ), 152-177 (KHQF…DDEV), 315-381 (LPMN…QQLQ), 397-472 (QNVP…PLKK), and 515-546 (EREA…ESDD). Residues 41–58 (ISRNGNDSNINIQPSSVP) show a composition bias toward polar residues. A compositionally biased stretch (basic residues) spans 152-162 (KHQFGKSKKNT). A compositionally biased stretch (polar residues) spans 318-358 (NNYNNHPGQFQNTPPVMPSGQQPPQQPRTLSLTNGPRYSPQ). Residues 367–381 (QQISQRQQQQQQQLQ) show a composition bias toward low complexity. Over residues 397–409 (QNVPQGFNPWSPN) the composition is skewed to polar residues. The segment covering 417-433 (SMKQPISQSSISSKNNS) has biased composition (low complexity). Polar residues predominate over residues 434 to 470 (AYSIPNVQNNSLTTFSPSSPTDATAMPNSTKQGSSPL). The segment covering 515–533 (EREALVEEKEKERAEKNTE) has biased composition (basic and acidic residues). Ser553, Ser586, and Ser619 each carry phosphoserine. Residues 616-639 (EFPSPGKYNSNSDNGEMNTTNEVD) are disordered. A compositionally biased stretch (polar residues) spans 622–639 (KYNSNSDNGEMNTTNEVD). Position 649 is a phosphoserine (Ser649). Residues 654–683 (IPERDPKRNVSDATIKRRESDGNGRRLSNV) are disordered. Residues 655–677 (PERDPKRNVSDATIKRRESDGNG) show a composition bias toward basic and acidic residues. A phosphoserine mark is found at Ser681, Ser766, and Ser771.

This is an uncharacterized protein from Saccharomyces cerevisiae (strain ATCC 204508 / S288c) (Baker's yeast).